Here is a 106-residue protein sequence, read N- to C-terminus: EFRKSDIGSSLPQHFRWSQVGSQSIQLSWDDHKVNGHTPDQVHLFVIPRSSSLQRVEKQVAFSAKTVILEGLHGNTLYYVILTVSAGEEECSITSAQSELRSMCIK.

The Fibronectin type-III domain occupies 11 to 106; it reads LPQHFRWSQV…QSELRSMCIK (96 aa).

The chain is Oncosphere antigen B (ONCB) from Hydatigena taeniaeformis (Feline tapeworm).